A 178-amino-acid polypeptide reads, in one-letter code: Large ribosomal subunit protein uL6 (178 aa).

Over residues Pro-155 to Arg-169 the composition is skewed to basic and acidic residues. Residues Pro-155–Lys-178 form a disordered region.

The protein belongs to the universal ribosomal protein uL6 family. As to quaternary structure, part of the 50S ribosomal subunit.

Its function is as follows. This protein binds to the 23S rRNA, and is important in its secondary structure. It is located near the subunit interface in the base of the L7/L12 stalk, and near the tRNA binding site of the peptidyltransferase center. This chain is Large ribosomal subunit protein uL6, found in Nitratidesulfovibrio vulgaris (strain DSM 19637 / Miyazaki F) (Desulfovibrio vulgaris).